Here is a 295-residue protein sequence, read N- to C-terminus: Inorganic pyrophosphatase 1 (295 aa).

Residue Asp-19 is the Nucleophile of the active site. Mg(2+) contacts are provided by Asp-19 and Asp-21. The Proton donor role is filled by Asp-21. Positions 30 and 105 each coordinate substrate. Asp-190 is a binding site for Mg(2+).

Belongs to the HAD-like hydrolase superfamily. In terms of assembly, tetramer. Requires Mg(2+) as cofactor. The cofactor is Fe(2+). It depends on Ni(2+) as a cofactor. Co(2+) is required as a cofactor. Mn(2+) serves as cofactor.

The enzyme catalyses diphosphate + H2O = 2 phosphate + H(+). Catalyzes the specific cleavage of pyrophosphate. In Arabidopsis thaliana (Mouse-ear cress), this protein is Inorganic pyrophosphatase 1 (PS2).